Here is a 323-residue protein sequence, read N- to C-terminus: tRNA U34 carboxymethyltransferase (323 aa).

Carboxy-S-adenosyl-L-methionine is bound by residues lysine 91, tryptophan 105, lysine 110, glycine 130, 181–182, methionine 196, tyrosine 200, and arginine 315; that span reads IE.

Belongs to the class I-like SAM-binding methyltransferase superfamily. CmoB family. As to quaternary structure, homotetramer.

It carries out the reaction carboxy-S-adenosyl-L-methionine + 5-hydroxyuridine(34) in tRNA = 5-carboxymethoxyuridine(34) in tRNA + S-adenosyl-L-homocysteine + H(+). Its function is as follows. Catalyzes carboxymethyl transfer from carboxy-S-adenosyl-L-methionine (Cx-SAM) to 5-hydroxyuridine (ho5U) to form 5-carboxymethoxyuridine (cmo5U) at position 34 in tRNAs. This is tRNA U34 carboxymethyltransferase from Edwardsiella ictaluri (strain 93-146).